The following is a 352-amino-acid chain: MKGFAMLSIGKVGWIEKEKPAPGPFDAIVRPLAVAPCTSDIHTVFEGAIGERHNMILGHEAVGEVVEVGSEVKDFKPGDRVVVPAITPDWRTSEVQRGYHQHSGGMLAGWKFSNVKDGVFGEFFHVNDADMNLAHLPKEIPLEAAVMIPDMMTTGFHGAELADIELGATVAVLGIGPVGLMAVAGAKLRGAGRIIAVGSRPVCVDAAKYYGATDIVNYKDGPIESQIMNLTEGKGVDAAIIAGGNADIMATAVKIVKPGGTIANVNYFGEGEVLPVPRLEWGCGMAHKTIKGGLCPGGRLRMERLIDLVFYKRVDPSKLVTHVFRGFDNIEKAFMLMKDKPKDLIKPVVILA.

Cys37, His59, and Asp150 together coordinate Zn(2+). Residues 175 to 178 (IGPV), 198 to 200 (GSR), Tyr218, 265 to 267 (VNY), and Lys340 each bind NADP(+).

This sequence belongs to the zinc-containing alcohol dehydrogenase family. Homotetramer. The cofactor is Zn(2+).

It catalyses the reaction propan-2-ol + NADP(+) = acetone + NADPH + H(+). In terms of biological role, alcohol dehydrogenase with a preference for medium chain secondary alcohols, such as 2-butanol and isopropanol. Has very low activity with primary alcohols, such as ethanol. Under physiological conditions, the enzyme reduces aldehydes and 2-ketones to produce secondary alcohols. Is also active with acetaldehyde and propionaldehyde. In Thermoanaerobacter brockii (Thermoanaerobium brockii), this protein is NADP-dependent isopropanol dehydrogenase (adh).